A 1383-amino-acid chain; its full sequence is PAS domain-containing serine/threonine-protein kinase (1383 aa).

An N-acetylmethionine modification is found at methionine 1. Serine 19 bears the Phosphoserine mark. At threonine 31 the chain carries Phosphothreonine. PAS domains lie at 117–188 (SGSL…VEAD) and 333–400 (YQAS…SVQL). Serine 1000 is subject to Phosphoserine. One can recognise a Protein kinase domain in the interval 1059–1311 (YNTISPLGSG…LEKLIRDPWV (253 aa)). Residues 1065–1073 (LGSGAFGFV), lysine 1088, and 1142–1149 (EKHGSGMD) contribute to the ATP site. Aspartate 1188 (proton acceptor) is an active-site residue. Aspartate 1206 serves as a coordination point for ATP. Phosphothreonine; by autocatalysis is present on residues threonine 1221 and threonine 1225. A disordered region spans residues 1344–1383 (GSRSPSEMAQREGLCGPPAPRETRGDQHCLHLKDPSLPVS). The span at 1364-1377 (RETRGDQHCLHLKD) shows a compositional bias: basic and acidic residues.

The protein belongs to the protein kinase superfamily. CAMK Ser/Thr protein kinase family. Post-translationally, autophosphorylated on Thr-1221 and Thr-1225. Autophosphorylation is activated by phospholipids. Ubiquitously expressed. Strongly up-regulated in postmeiotic germ cells during spermatogenesis.

It is found in the cytoplasm. It localises to the nucleus. It carries out the reaction L-seryl-[protein] + ATP = O-phospho-L-seryl-[protein] + ADP + H(+). The enzyme catalyses L-threonyl-[protein] + ATP = O-phospho-L-threonyl-[protein] + ADP + H(+). With respect to regulation, protein kinase activity is inhibited by the first PAS domain: binding of an unidentified ligand desinhibits the protein kinase activity. May be activated by autophosphorylation on Thr-1221 and Thr-1225. Autophosphorylation is enhanced upon phosphatidylinositol monophosphate (phosphatidylinositol 4-phosphate) binding and inhibited upon phosphatidylinositol bi- and tri-phosphate binding. In contrast, phosphorylation of target proteins is inhibited upon all phosphatidylinositol-binding (phosphatidylinositol mono- bi- and tri-phosphate). In terms of biological role, serine/threonine-protein kinase involved in energy homeostasis and protein translation. Phosphorylates EEF1A1, GYS1, PDX1 and RPS6. Probably plays a role under changing environmental conditions (oxygen, glucose, nutrition), rather than under standard conditions. Acts as a sensor involved in energy homeostasis: regulates glycogen synthase synthesis by mediating phosphorylation of GYS1, leading to GYS1 inactivation. May be involved in glucose-stimulated insulin production in pancreas and regulation of glucagon secretion by glucose in alpha cells; however such data require additional evidences. May play a role in regulation of protein translation by phosphorylating EEF1A1, leading to increase translation efficiency. May also participate in respiratory regulation. This is PAS domain-containing serine/threonine-protein kinase (Pask) from Mus musculus (Mouse).